Here is a 388-residue protein sequence, read N- to C-terminus: LL-diaminopimelate aminotransferase (388 aa).

Substrate is bound by residues tyrosine 13, glycine 38, lysine 102, tyrosine 126, and asparagine 176. Residues 101–102 (SK), tyrosine 126, asparagine 176, tyrosine 207, and 235–237 (SLS) contribute to the pyridoxal 5'-phosphate site. At lysine 238 the chain carries N6-(pyridoxal phosphate)lysine. Arginine 246 serves as a coordination point for pyridoxal 5'-phosphate. Substrate is bound at residue arginine 364.

The protein belongs to the class-I pyridoxal-phosphate-dependent aminotransferase family. LL-diaminopimelate aminotransferase subfamily. As to quaternary structure, homodimer. The cofactor is pyridoxal 5'-phosphate.

The catalysed reaction is (2S,6S)-2,6-diaminopimelate + 2-oxoglutarate = (S)-2,3,4,5-tetrahydrodipicolinate + L-glutamate + H2O + H(+). Its pathway is amino-acid biosynthesis; L-lysine biosynthesis via DAP pathway; LL-2,6-diaminopimelate from (S)-tetrahydrodipicolinate (aminotransferase route): step 1/1. In terms of biological role, involved in the synthesis of meso-diaminopimelate (m-DAP or DL-DAP), required for both lysine and peptidoglycan biosynthesis. Catalyzes the direct conversion of tetrahydrodipicolinate to LL-diaminopimelate. The polypeptide is LL-diaminopimelate aminotransferase (Dehalococcoides mccartyi (strain ATCC BAA-2266 / KCTC 15142 / 195) (Dehalococcoides ethenogenes (strain 195))).